We begin with the raw amino-acid sequence, 52 residues long: Insulin (52 aa).

Disulfide bonds link C7–C38, C19–C51, and C37–C42.

This sequence belongs to the insulin family. Heterodimer of a B chain and an A chain linked by two disulfide bonds.

It localises to the secreted. In terms of biological role, insulin decreases blood glucose concentration. It increases cell permeability to monosaccharides, amino acids and fatty acids. It accelerates glycolysis, the pentose phosphate cycle, and glycogen synthesis in liver. This Acipenser gueldenstaedtii (Russian sturgeon) protein is Insulin (ins).